A 97-amino-acid chain; its full sequence is Defensin-like protein 246 (97 aa).

Positions 1 to 24 (MKFVAIFLVTCVLFSLFPSHLSQG) are cleaved as a signal peptide. Disulfide bonds link Cys-39–Cys-96, Cys-50–Cys-79, Cys-58–Cys-89, and Cys-77–Cys-91.

Belongs to the DEFL family. Flower buds and stems.

The protein localises to the secreted. This is Defensin-like protein 246 (SCRL5) from Arabidopsis thaliana (Mouse-ear cress).